Reading from the N-terminus, the 228-residue chain is Urease accessory protein UreF 1 (228 aa).

It belongs to the UreF family. As to quaternary structure, ureD, UreF and UreG form a complex that acts as a GTP-hydrolysis-dependent molecular chaperone, activating the urease apoprotein by helping to assemble the nickel containing metallocenter of UreC. The UreE protein probably delivers the nickel.

Its subcellular location is the cytoplasm. In terms of biological role, required for maturation of urease via the functional incorporation of the urease nickel metallocenter. The protein is Urease accessory protein UreF 1 of Brucella anthropi (strain ATCC 49188 / DSM 6882 / CCUG 24695 / JCM 21032 / LMG 3331 / NBRC 15819 / NCTC 12168 / Alc 37) (Ochrobactrum anthropi).